The following is a 353-amino-acid chain: Cruciform cutting endonuclease 1, mitochondrial (353 aa).

Residues aspartate 293 and aspartate 294 each coordinate Mg(2+).

Homodimer. Mg(2+) is required as a cofactor.

It is found in the mitochondrion. It catalyses the reaction Endonucleolytic cleavage at a junction such as a reciprocal single-stranded crossover between two homologous DNA duplexes (Holliday junction).. In terms of biological role, capable of resolving Holliday junctions. Specific for 4-way junctions. Seems to be important for the maintenance of mitochondrial DNA. Cleaves fixed junctions at the point of strand exchange. Cleaves after 5'-CT-3' sequence. The polypeptide is Cruciform cutting endonuclease 1, mitochondrial (CCE1) (Saccharomyces cerevisiae (strain ATCC 204508 / S288c) (Baker's yeast)).